We begin with the raw amino-acid sequence, 490 residues long: Bifunctional protein HldE (490 aa).

The segment at 1–330 is ribokinase; sequence MNNFDTLLQS…RKILPHASLA (330 aa). 205-208 contacts ATP; that stretch reads NRKE. Residue Asp275 is part of the active site. The cytidylyltransferase stretch occupies residues 358–490; that stretch reads FTNGCFDILH…LVEKAREGTS (133 aa).

The protein in the N-terminal section; belongs to the carbohydrate kinase PfkB family. In the C-terminal section; belongs to the cytidylyltransferase family. In terms of assembly, homodimer.

It carries out the reaction D-glycero-beta-D-manno-heptose 7-phosphate + ATP = D-glycero-beta-D-manno-heptose 1,7-bisphosphate + ADP + H(+). The enzyme catalyses D-glycero-beta-D-manno-heptose 1-phosphate + ATP + H(+) = ADP-D-glycero-beta-D-manno-heptose + diphosphate. The protein operates within nucleotide-sugar biosynthesis; ADP-L-glycero-beta-D-manno-heptose biosynthesis; ADP-L-glycero-beta-D-manno-heptose from D-glycero-beta-D-manno-heptose 7-phosphate: step 1/4. It participates in nucleotide-sugar biosynthesis; ADP-L-glycero-beta-D-manno-heptose biosynthesis; ADP-L-glycero-beta-D-manno-heptose from D-glycero-beta-D-manno-heptose 7-phosphate: step 3/4. Its function is as follows. Catalyzes the phosphorylation of D-glycero-D-manno-heptose 7-phosphate at the C-1 position to selectively form D-glycero-beta-D-manno-heptose-1,7-bisphosphate. Catalyzes the ADP transfer from ATP to D-glycero-beta-D-manno-heptose 1-phosphate, yielding ADP-D-glycero-beta-D-manno-heptose. This is Bifunctional protein HldE from Rhodopseudomonas palustris (strain HaA2).